The sequence spans 117 residues: Peptidyl-tRNA hydrolase (117 aa).

It belongs to the PTH2 family.

It localises to the cytoplasm. It catalyses the reaction an N-acyl-L-alpha-aminoacyl-tRNA + H2O = an N-acyl-L-amino acid + a tRNA + H(+). Its function is as follows. The natural substrate for this enzyme may be peptidyl-tRNAs which drop off the ribosome during protein synthesis. The polypeptide is Peptidyl-tRNA hydrolase (Thermoplasma volcanium (strain ATCC 51530 / DSM 4299 / JCM 9571 / NBRC 15438 / GSS1)).